The sequence spans 226 residues: Cytidylate kinase (226 aa).

An ATP-binding site is contributed by 10-18; sequence GPASSGKST.

The protein belongs to the cytidylate kinase family. Type 1 subfamily.

Its subcellular location is the cytoplasm. It catalyses the reaction CMP + ATP = CDP + ADP. The catalysed reaction is dCMP + ATP = dCDP + ADP. The polypeptide is Cytidylate kinase (Streptococcus pyogenes serotype M5 (strain Manfredo)).